Here is a 186-residue protein sequence, read N- to C-terminus: MKINRLKKYYLQTIVPKLIEQFAYKNQMQVPRLEKIVINRGIGDASQNAKVLESSLKELTIIAGQKGIITRSKKAIAGFKLRQNLPVGVCVTLRGERMYSFLDRLINLALPRIRDFRGMSVESFDGQGNYSLGVEEQLMFPEIVYDKIEQITGMDISIVTSSKTNDEAHALLKEFGMPFKAKGNKN.

It belongs to the universal ribosomal protein uL5 family. As to quaternary structure, part of the 50S ribosomal subunit; contacts the 5S rRNA.

The protein localises to the plastid. It localises to the chloroplast. Binds 5S rRNA, forms part of the central protuberance of the 50S subunit. This is Large ribosomal subunit protein uL5c (rpl5) from Pleurastrum terricola (Filamentous green alga).